The sequence spans 204 residues: Protein PAXX (204 aa).

Residues phenylalanine 37–alanine 79 enclose the PISA domain. The residue at position 134 (serine 134) is a Phosphoserine. The interval glutamate 143–threonine 204 is disordered. Threonine 145 is subject to Phosphothreonine. A phosphoserine mark is found at serine 148 and serine 152. The mediates interaction with XRCC5/Ku80 and XRCC6/Ku70 and association with the non-homologous end joining core complex stretch occupies residues glycine 171–threonine 204. Positions phenylalanine 190 to threonine 204 match the XLM motif.

The protein belongs to the XRCC4-XLF family. PAXX subfamily. Homodimer. Interacts with the DNA-bound XRCC5/Ku80 and XRCC6/Ku70 heterodimer (Ku complex); the interaction is direct. Associated component of the non-homologous end joining (NHEJ) complex, composed of the core proteins PRKDC, LIG4, XRCC4, XRCC6/Ku70, XRCC5/Ku86 and NHEJ1/XLF. Interacts with POLL (DNA polymerase lambda); promoting POLL recruitment to double-strand breaks (DSBs) and stimulation of the end-filling activity of POLL. Phosphorylation may inhibit interaction with the DNA-bound XRCC5/Ku80 and XRCC6/Ku70 heterodimer (Ku complex).

The protein resides in the nucleus. It localises to the chromosome. Its subcellular location is the cytoplasm. Non-essential DNA repair protein involved in DNA non-homologous end joining (NHEJ); participates in double-strand break (DSB) repair and V(D)J recombination. May act as a scaffold required for accumulation of the Ku heterodimer, composed of XRCC5/Ku80 and XRCC6/Ku70, at double-strand break sites and promote the assembly and/or stability of the NHEJ machinery. Involved in NHEJ by promoting the ligation of blunt-ended DNA ends. Together with NHEJ1/XLF, collaborates with DNA polymerase lambda (POLL) to promote joining of non-cohesive DNA ends. Constitutes a non-essential component of classical NHEJ: has a complementary but distinct function with NHEJ1/XLF in DNA repair. Able to restrict infection by herpesvirus 1 (HSV-1) via an unknown mechanism. This Homo sapiens (Human) protein is Protein PAXX.